Consider the following 37-residue polypeptide: Large ribosomal subunit protein bL36 (37 aa).

This sequence belongs to the bacterial ribosomal protein bL36 family.

The sequence is that of Large ribosomal subunit protein bL36 from Azoarcus sp. (strain BH72).